A 134-amino-acid chain; its full sequence is Cytochrome b (134 aa).

The next 3 membrane-spanning stretches (helical) occupy residues 33–53, 77–98, and 113–133; these read FGSL…FLAM, WLLR…YLHV, and WNIG…GYVL. Residues His83 and His97 each contribute to the heme b site.

This sequence belongs to the cytochrome b family. The cytochrome bc1 complex contains 11 subunits: 3 respiratory subunits (MT-CYB, CYC1 and UQCRFS1), 2 core proteins (UQCRC1 and UQCRC2) and 6 low-molecular weight proteins (UQCRH/QCR6, UQCRB/QCR7, UQCRQ/QCR8, UQCR10/QCR9, UQCR11/QCR10 and a cleavage product of UQCRFS1). This cytochrome bc1 complex then forms a dimer. Heme b is required as a cofactor.

It localises to the mitochondrion inner membrane. In terms of biological role, component of the ubiquinol-cytochrome c reductase complex (complex III or cytochrome b-c1 complex) that is part of the mitochondrial respiratory chain. The b-c1 complex mediates electron transfer from ubiquinol to cytochrome c. Contributes to the generation of a proton gradient across the mitochondrial membrane that is then used for ATP synthesis. The sequence is that of Cytochrome b (MT-CYB) from Chiroderma salvini (Salvin's big-eyed bat).